Consider the following 659-residue polypeptide: Forkhead box protein P1-B (659 aa).

2 stretches are compositionally biased toward polar residues: residues 1-16 and 32-41; these read MMQESGTEAANGTAHQ and KSTTPSSDIT. Disordered stretches follow at residues 1-41 and 229-263; these read MMQE…SDIT and ENSVTNNGHRGLDLSSPSPVPLKNHNQHGSTNGQY. The C2H2-type zinc finger occupies 289 to 314; the sequence is GVCKWPGCEAVFEDFQSFLKHLNNEH. The segment at 331–352 is leucine-zipper; it reads VQQLELQLAKDKERLQAMMTHL. The tract at residues 365 to 369 is CTBP1-binding; that stretch reads PLNLV. The tract at residues 379-413 is disordered; that stretch reads PAASPPLSLPQTPTTPTAPLTPLSQTHSVITPTSL. Residues 387 to 404 show a composition bias toward low complexity; sequence LPQTPTTPTAPLTPLSQT. Residues 448–538 constitute a DNA-binding region (fork-head); the sequence is RPPFTYASLI…PQKISGSPAL (91 aa). Positions 590–659 are disordered; sequence GAMDHGNSNG…EDDHGTEDML (70 aa). Residues 595–605 show a composition bias toward polar residues; it reads GNSNGSDSSPG. The segment covering 641–659 has biased composition (basic and acidic residues); that stretch reads PDFDHHRDYEDDHGTEDML.

In terms of tissue distribution, shows complex and dynamic expression during early embryonic development. Prominent in many regions of the developing central nervous system, particularly in midbrain-hindbrain boundary, hindbrain and spinal cord. Strongly expressed in the retina, ear, branchial arches, hatching gland, heart, pronephric duct, gut, proctodeum, pectoral fin and swim bladder.

The protein localises to the nucleus. Its function is as follows. Transcriptional repressor. The polypeptide is Forkhead box protein P1-B (foxp1b) (Danio rerio (Zebrafish)).